The sequence spans 1021 residues: Nonribosomal peptide synthetase asaC (1021 aa).

The interval 17 to 418 (RHHVRTSPNA…ARADNMVKIR (402 aa)) is adenylation (A) domain. The 76-residue stretch at 528-603 (KDAGDSVTWL…GLASVIDAGH (76 aa)) folds into the Carrier domain. Ser563 carries the O-(pantetheine 4'-phosphoryl)serine modification. A short-chain dehydrogenase/reductase (R) domain region spans residues 646-888 (LTGATGFLGT…MIPVDFITTA (243 aa)).

It belongs to the NRP synthetase family.

It functions in the pathway secondary metabolite biosynthesis. In terms of biological role, nonribosomal peptide synthetase; part of the gene cluster that mediates the biosynthesis of aspergillic acid, a hydroxamic acid-containing pyrazinone with aliphatic side chains that originates from leucine (Leu) and isoleucine (Ile). Aspergillic acid has antibiotic properties and was shown to be lethal to mice. The first step in the pathway is the production of deoxyaspergillic acid via a condensation between the Ile amine and the Leu carboxylic acid, followed by a reductive release from the protein forming the dipeptide aldehyde NH(2)-Leu-Ile-CHO, which could undergo an intermolecular cyclization resulting in a dihydropyrazinone. As the NRPS asaC lacks a condensation domain, it is improbable that it is responsible for condensation of Leu and Ile. One possibility is that asaC acts on a previously condensed dipeptide and functions as a Leu-Ile reductase to yield deoxyaspergillic acid. After asaC forms deoxyaspergillic acid, the cytochrome P450 asaD oxidizes the pyrazinone to the hydroxamic acid-containing bioactive metabolite aspergillic acid. The hydroxylase/desaturase asaB can then convert aspergillic acid to hydroxyaspergillic acid. Both aspergillic acid and hydroxyaspergillic acid can form complexes with iron producing ferriaspergillin analogs. The protein is Nonribosomal peptide synthetase asaC of Aspergillus flavus (strain ATCC 200026 / FGSC A1120 / IAM 13836 / NRRL 3357 / JCM 12722 / SRRC 167).